A 185-amino-acid chain; its full sequence is Lipopolysaccharide export system protein LptA (185 aa).

Positions 1–27 (MKFKTNKLSLNLVLASSLLAASIPAFA) are cleaved as a signal peptide. Residues 166 to 185 (PSQLQDKNNKGQTPAQKKGN) are disordered.

This sequence belongs to the LptA family. In terms of assembly, component of the lipopolysaccharide transport and assembly complex.

The protein resides in the periplasm. Involved in the assembly of lipopolysaccharide (LPS). Required for the translocation of LPS from the inner membrane to the outer membrane. May form a bridge between the inner membrane and the outer membrane, via interactions with LptC and LptD, thereby facilitating LPS transfer across the periplasm. The protein is Lipopolysaccharide export system protein LptA of Escherichia coli O157:H7.